An 880-amino-acid polypeptide reads, in one-letter code: Alanine--tRNA ligase (880 aa).

A disordered region spans residues 414–443 (TVDESEFESEMEKQRNRARKARSGGDTEGW). Residues histidine 566, histidine 570, cysteine 668, and histidine 672 each coordinate Zn(2+).

This sequence belongs to the class-II aminoacyl-tRNA synthetase family. Requires Zn(2+) as cofactor.

The protein resides in the cytoplasm. It catalyses the reaction tRNA(Ala) + L-alanine + ATP = L-alanyl-tRNA(Ala) + AMP + diphosphate. Catalyzes the attachment of alanine to tRNA(Ala) in a two-step reaction: alanine is first activated by ATP to form Ala-AMP and then transferred to the acceptor end of tRNA(Ala). Also edits incorrectly charged Ser-tRNA(Ala) and Gly-tRNA(Ala) via its editing domain. The sequence is that of Alanine--tRNA ligase from Alkaliphilus metalliredigens (strain QYMF).